The following is a 79-amino-acid chain: Exodeoxyribonuclease 7 small subunit (79 aa).

Belongs to the XseB family. In terms of assembly, heterooligomer composed of large and small subunits.

It is found in the cytoplasm. The enzyme catalyses Exonucleolytic cleavage in either 5'- to 3'- or 3'- to 5'-direction to yield nucleoside 5'-phosphates.. In terms of biological role, bidirectionally degrades single-stranded DNA into large acid-insoluble oligonucleotides, which are then degraded further into small acid-soluble oligonucleotides. The polypeptide is Exodeoxyribonuclease 7 small subunit (Syntrophus aciditrophicus (strain SB)).